Here is a 639-residue protein sequence, read N- to C-terminus: CREB3 regulatory factor (639 aa).

The tract at residues 302–422 is disordered; that stretch reads PLPQEGPGSL…SVEDLKEVTS (121 aa). Residues 310–328 show a composition bias toward low complexity; it reads SLAAGESSSLSASTSVSDS. A compositionally biased stretch (polar residues) spans 339-351; that stretch reads LFVSDNLGEQPTK. The segment covering 355–370 has biased composition (acidic residues); it reads EEDEEDEEDVDDEDHD. Positions 371–380 are enriched in basic and acidic residues; sequence EGFGSEHELS. Acidic residues predominate over residues 381 to 401; it reads ENEEEEEEEEDYEDDKDDDIS. The bZIP domain occupies 521-584; it reads TARPRSRKEK…VNRVQNPRDE (64 aa). Residues 523–532 are basic motif; sequence RPRSRKEKNK. Residues 533-540 are leucine-zipper; sequence LASRACRL.

The protein belongs to the bZIP family. CREBRF subfamily. Interacts (via leucine-zipper domain) with CREB3 (via leucine-zipper domain); the interaction promotes CREB3 degradation. In terms of processing, probably degraded by the proteasome.

The protein resides in the nucleus. Its function is as follows. Acts as a negative regulator of the endoplasmic reticulum stress response or unfolded protein response (UPR). Represses the transcriptional activity of CREB3 during the UPR. Recruits CREB3 into nuclear foci. This chain is CREB3 regulatory factor (CREBRF), found in Homo sapiens (Human).